The chain runs to 229 residues: Ras-related protein Rab-33B (229 aa).

Residues N43, V44, G45, K46, T47, C48, T62, and T65 each coordinate GTP. Mg(2+) is bound at residue T47. The Switch 1 signature appears at 56-68 (GRFPDRTEATIGV). T65 and D88 together coordinate Mg(2+). The short motif at 89 to 108 (TAGQERFRKSMVQHYYRNVH) is the Switch 2 element. Positions 91, 148, 149, 151, 179, and 180 each coordinate GTP. 2 S-geranylgeranyl cysteine lipidation sites follow: C227 and C229. C229 is subject to Cysteine methyl ester.

The protein belongs to the small GTPase superfamily. Rab family. Interacts (GTP- and GDP-bound forms) with ATG16L1; the complex consists of a tetramer where two RAB33B molecules bind independently one molecule of the ATG16L1 homodimer; the interaction promotes ATG12-ATG5-ATG16L1 complex recruitment to phagophores. Interacts with ATG16L2; however interaction is approximately hundred times lower than for ATG16L1. Interacts with RIC1 (via C-terminus domain); the interaction is direct with a preference for RAB33B-GTP. Interacts with RGP1. It depends on Mg(2+) as a cofactor. Post-translationally, prenylated.

The protein resides in the golgi apparatus membrane. The protein localises to the golgi apparatus. It localises to the cis-Golgi network. It is found in the preautophagosomal structure membrane. It catalyses the reaction GTP + H2O = GDP + phosphate + H(+). Its activity is regulated as follows. Regulated by guanine nucleotide exchange factors (GEFs) which promote the exchange of bound GDP for free GTP. Regulated by GTPase activating proteins (GAPs) such as SGSM2 which increase the GTP hydrolysis activity. Inhibited by GDP dissociation inhibitors (GDIs). Its function is as follows. The small GTPases Rab are key regulators of intracellular membrane trafficking, from the formation of transport vesicles to their fusion with membranes. Rabs cycle between an inactive GDP-bound form and an active GTP-bound form that is able to recruit to membranes different sets of downstream effectors directly responsible for vesicle formation, movement, tethering and fusion. RAB33B acts, in coordination with RAB6A, to regulate intra-Golgi retrograde trafficking. Participates in autophagosome formation by recruiting the ATG12-ATG5-ATG16L1 complex to phagophores, probably in a nucleotide-independent manner. The chain is Ras-related protein Rab-33B from Homo sapiens (Human).